The following is a 1033-amino-acid chain: Immunoglobulin superfamily member 2 (1033 aa).

The N-terminal stretch at 1 to 20 (MACILCVASLFLSLTKFSIG) is a signal peptide. The Extracellular portion of the chain corresponds to 21 to 970 (QREVKIQEGP…VSSLICSSGP (950 aa)). 7 Ig-like C2-type domains span residues 22 to 141 (REVK…TNLT), 144 to 266 (PDTL…TLIT), 279 to 388 (PAAR…TQMG), 408 to 529 (PAAR…QKIS), 539 to 657 (LRVN…ARVS), 670 to 797 (PESK…RKTS), and 806 to 941 (PTGS…KWIN). An intrachain disulfide couples cysteine 43 to cysteine 121. A glycan (N-linked (GlcNAc...) asparagine) is linked at asparagine 139. Cysteines 168 and 249 form a disulfide. The EWI motif signature appears at 253-255 (EWI). 3 disulfides stabilise this stretch: cysteine 304–cysteine 377, cysteine 432–cysteine 509, and cysteine 560–cysteine 638. An N-linked (GlcNAc...) asparagine glycan is attached at asparagine 677. Intrachain disulfides connect cysteine 695–cysteine 776 and cysteine 832–cysteine 925. The chain crosses the membrane as a helical span at residues 971–991 (LLHFLIVCPFVMLLLLATSFL). Over 992–1033 (CLYRKARKLSQLSLSAKKEKALWVGMRKTSLQKEAGEESGHY) the chain is Cytoplasmic.

N-glycosylated.

It localises to the membrane. Its function is as follows. Plays a role as inhibitor of T-cells proliferation induced by CD3. Inhibits expression of IL2RA on activated T-cells and secretion of IL2. Inhibits tyrosine kinases that are required for IL2 production and cellular proliferation. Inhibits phospholipase C-gamma-1/PLCG1 phosphorylation and subsequent CD3-induced changes in intracellular free calcium. Prevents nuclear translocation of nuclear factor of activated T-cell to the nucleus. Plays a role in the inhibition of T-cell proliferation via IL10 secretion by cutaneous dendritic cells. The protein is Immunoglobulin superfamily member 2 (Cd101) of Mus musculus (Mouse).